Here is a 102-residue protein sequence, read N- to C-terminus: MVYAIVRAGGRQEKVSVGDFVTLNRVAGGAGSTIELPALLLVDGDKITTAAADLAKVTVTAEILQDLRGPKIVIQKFKNKTGYKKRQGHRQELTKVKITGIK.

It belongs to the bacterial ribosomal protein bL21 family. In terms of assembly, part of the 50S ribosomal subunit. Contacts protein L20.

Its function is as follows. This protein binds to 23S rRNA in the presence of protein L20. The protein is Large ribosomal subunit protein bL21 of Pseudarthrobacter chlorophenolicus (strain ATCC 700700 / DSM 12829 / CIP 107037 / JCM 12360 / KCTC 9906 / NCIMB 13794 / A6) (Arthrobacter chlorophenolicus).